Here is a 413-residue protein sequence, read N- to C-terminus: 3-oxoacyl-[acyl-carrier-protein] synthase 2 (413 aa).

Positions 3-412 constitute a Ketosynthase family 3 (KS3) domain; the sequence is KRRVVVTGLG…GTNGSLIFKK (410 aa). Catalysis depends on for beta-ketoacyl synthase activity residues Cys164, His304, and His341.

The protein belongs to the thiolase-like superfamily. Beta-ketoacyl-ACP synthases family. Homodimer.

The enzyme catalyses a fatty acyl-[ACP] + malonyl-[ACP] + H(+) = a 3-oxoacyl-[ACP] + holo-[ACP] + CO2. It carries out the reaction (9Z)-hexadecenoyl-[ACP] + malonyl-[ACP] + H(+) = 3-oxo-(11Z)-octadecenoyl-[ACP] + holo-[ACP] + CO2. It participates in lipid metabolism; fatty acid biosynthesis. Functionally, involved in the type II fatty acid elongation cycle. Catalyzes the elongation of a wide range of acyl-ACP by the addition of two carbons from malonyl-ACP to an acyl acceptor. Can efficiently catalyze the conversion of palmitoleoyl-ACP (cis-hexadec-9-enoyl-ACP) to cis-vaccenoyl-ACP (cis-octadec-11-enoyl-ACP), an essential step in the thermal regulation of fatty acid composition. The protein is 3-oxoacyl-[acyl-carrier-protein] synthase 2 (fabF) of Escherichia coli O157:H7.